Consider the following 378-residue polypeptide: Outer membrane porin C (378 aa).

Positions M1 to A21 are cleaved as a signal peptide.

Belongs to the Gram-negative porin family. Homotrimer.

The protein localises to the cell outer membrane. Its function is as follows. Forms pores that allow passive diffusion of small molecules across the outer membrane. The polypeptide is Outer membrane porin C (ompC) (Salmonella typhimurium (strain LT2 / SGSC1412 / ATCC 700720)).